The chain runs to 466 residues: NADPH:adrenodoxin oxidoreductase, mitochondrial (466 aa).

Residues alanine 40, glutamate 61, leucine 69, and leucine 105 each contribute to the FAD site. NADP(+) is bound by residues 176–179 (QGNV), 220–221 (RR), and glutamate 232. Residues tryptophan 379 and 386 to 388 (GVI) contribute to the FAD site. Position 386 (glycine 386) interacts with NADP(+).

This sequence belongs to the ferredoxin--NADP reductase type 1 family. FAD serves as cofactor. As to expression, expressed predominantly in prothoracic gland of the larval ring gland and nurse cells of the adult ovary. Low expression is all adult tissues examined.

It is found in the mitochondrion inner membrane. The catalysed reaction is 2 reduced [adrenodoxin] + NADP(+) + H(+) = 2 oxidized [adrenodoxin] + NADPH. The protein operates within steroid metabolism; cholesterol metabolism. Its function is as follows. Required for synthesis of steroid hormones, for olfactory sensory behavior and completion of the second larval molt (a steroid mediated developmental transition) and pupariation. The polypeptide is NADPH:adrenodoxin oxidoreductase, mitochondrial (dare) (Drosophila melanogaster (Fruit fly)).